We begin with the raw amino-acid sequence, 1269 residues long: Clustered mitochondria protein homolog (1269 aa).

A Clu domain is found at 297–552; that stretch reads PSNNGDFMRT…NTNPVDIEFV (256 aa). The segment covering 958 to 969 has biased composition (basic and acidic residues); that stretch reads EKKKEESKKAAA. The disordered stretch occupies residues 958–989; that stretch reads EKKKEESKKAAADGEDAGSSGATSKEEEQAKE. 2 TPR repeats span residues 1020-1053 and 1147-1180; these read VSSY…SERC and GQNE…FSKE. Positions 1211–1269 are disordered; it reads LASAQQATKPANISQKKGKKSSSSSPALTNKSVDELLQFIEGPGASKSSKKSKKKHTKN. A compositionally biased stretch (polar residues) spans 1213-1223; that stretch reads SAQQATKPANI. Residues 1258 to 1269 show a composition bias toward basic residues; it reads SSKKSKKKHTKN.

This sequence belongs to the CLU family. May associate with the eukaryotic translation initiation factor 3 (eIF-3) complex.

It is found in the cytoplasm. MRNA-binding protein involved in proper cytoplasmic distribution of mitochondria. This Kluyveromyces lactis (strain ATCC 8585 / CBS 2359 / DSM 70799 / NBRC 1267 / NRRL Y-1140 / WM37) (Yeast) protein is Clustered mitochondria protein homolog.